Consider the following 440-residue polypeptide: Phosphatidylcholine-sterol acyltransferase (440 aa).

Residues 1–24 form the signal peptide; it reads MGPPGSPWQWVPLLLGLLLPPAAP. Asn-44 carries an N-linked (GlcNAc...) asparagine glycan. Cys-74 and Cys-98 are joined by a disulfide. N-linked (GlcNAc...) asparagine glycosylation is present at Asn-108. The active-site Nucleophile is Ser-205. An N-linked (GlcNAc...) asparagine glycan is attached at Asn-296. An intrachain disulfide couples Cys-337 to Cys-380. Catalysis depends on charge relay system residues Asp-369 and His-401. Asn-408 carries an N-linked (GlcNAc...) asparagine glycan.

Belongs to the AB hydrolase superfamily. Lipase family. In terms of tissue distribution, most abundant in liver and cerebellum.

The protein localises to the secreted. The enzyme catalyses a sterol + a 1,2-diacyl-sn-glycero-3-phosphocholine = a sterol ester + a 1-acyl-sn-glycero-3-phosphocholine. With respect to regulation, APOA1 is the most potent activator in plasma. Also activated by APOE, APOC1 and APOA4. In terms of biological role, central enzyme in the extracellular metabolism of plasma lipoproteins. Synthesized mainly in the liver and secreted into plasma where it converts cholesterol and phosphatidylcholines (lecithins) to cholesteryl esters and lysophosphatidylcholines on the surface of high and low density lipoproteins (HDLs and LDLs). The cholesterol ester is then transported back to the liver. Has a preference for plasma 16:0-18:2 or 18:O-18:2 phosphatidylcholines. Also produced in the brain by primary astrocytes, and esterifies free cholesterol on nascent APOE-containing lipoproteins secreted from glia and influences cerebral spinal fluid (CSF) APOE- and APOA1 levels. Together with APOE and the cholesterol transporter ABCA1, plays a key role in the maturation of glial-derived, nascent lipoproteins. Required for remodeling high-density lipoprotein particles into their spherical forms. This chain is Phosphatidylcholine-sterol acyltransferase (LCAT), found in Papio anubis (Olive baboon).